The primary structure comprises 398 residues: Mannitol-1-phosphate 5-dehydrogenase (398 aa).

Position 10–21 (10–21 (AVHFGAGNIGRG)) interacts with NAD(+). K221 is an active-site residue.

This sequence belongs to the mannitol dehydrogenase family. In terms of assembly, monomer.

It catalyses the reaction D-mannitol 1-phosphate + NAD(+) = beta-D-fructose 6-phosphate + NADH + H(+). Its function is as follows. Catalyzes the NAD(H)-dependent interconversion of D-fructose 6-phosphate and D-mannitol 1-phosphate in the mannitol metabolic pathway. The chain is Mannitol-1-phosphate 5-dehydrogenase from Neurospora crassa (strain ATCC 24698 / 74-OR23-1A / CBS 708.71 / DSM 1257 / FGSC 987).